A 126-amino-acid polypeptide reads, in one-letter code: MLLTLLKCKLHKATVTHSELEYEGSCAIDGDLLDAAGILPYEQIQIYNIANGERFTTYAIRAEAGSRVISVNGAAAHKANPGDRVIICAYGQLPREEAARFHPRLVYLDADNRIVRTGSDIPVQAA.

Residue Ser25 is the Schiff-base intermediate with substrate; via pyruvic acid of the active site. Ser25 carries the pyruvic acid (Ser) modification. Thr57 lines the substrate pocket. The Proton donor role is filled by Tyr58. 73–75 (GAA) is a binding site for substrate.

It belongs to the PanD family. Heterooctamer of four alpha and four beta subunits. Pyruvate serves as cofactor. Post-translationally, is synthesized initially as an inactive proenzyme, which is activated by self-cleavage at a specific serine bond to produce a beta-subunit with a hydroxyl group at its C-terminus and an alpha-subunit with a pyruvoyl group at its N-terminus.

It localises to the cytoplasm. It catalyses the reaction L-aspartate + H(+) = beta-alanine + CO2. It participates in cofactor biosynthesis; (R)-pantothenate biosynthesis; beta-alanine from L-aspartate: step 1/1. Functionally, catalyzes the pyruvoyl-dependent decarboxylation of aspartate to produce beta-alanine. The chain is Aspartate 1-decarboxylase from Thioalkalivibrio sulfidiphilus (strain HL-EbGR7).